A 489-amino-acid polypeptide reads, in one-letter code: Betaine aldehyde dehydrogenase (489 aa).

Positions 26 and 93 each coordinate K(+). An NAD(+)-binding site is contributed by 150-152; it reads GAW. Catalysis depends on K162, which acts as the Charge relay system. Residue 176 to 179 coordinates NAD(+); that stretch reads KPSE. Residue I180 participates in K(+) binding. 229-232 provides a ligand contact to NAD(+); it reads GVET. L245 contacts K(+). E251 (proton acceptor) is an active-site residue. Positions 253, 285, and 386 each coordinate NAD(+). C285 serves as the catalytic Nucleophile. C285 bears the Cysteine sulfenic acid (-SOH) mark. 2 residues coordinate K(+): K456 and G459. E463 acts as the Charge relay system in catalysis.

This sequence belongs to the aldehyde dehydrogenase family. Dimer of dimers. K(+) serves as cofactor.

The catalysed reaction is betaine aldehyde + NAD(+) + H2O = glycine betaine + NADH + 2 H(+). It functions in the pathway amine and polyamine biosynthesis; betaine biosynthesis via choline pathway; betaine from betaine aldehyde: step 1/1. Involved in the biosynthesis of the osmoprotectant glycine betaine. Catalyzes the irreversible oxidation of betaine aldehyde to the corresponding acid. This chain is Betaine aldehyde dehydrogenase, found in Paraburkholderia xenovorans (strain LB400).